The chain runs to 90 residues: MAHKKSGGSSSNGRDSAGRRLGVKKFGGQKVAAGNIIIRQRGTKFYPGANVGMGKDHTLFALIEGAVAFVTKRNNRTYVNVAAPVAQAAE.

The disordered stretch occupies residues 1-22 (MAHKKSGGSSSNGRDSAGRRLG).

It belongs to the bacterial ribosomal protein bL27 family.

This chain is Large ribosomal subunit protein bL27, found in Caulobacter sp. (strain K31).